The chain runs to 160 residues: SsrA-binding protein (160 aa).

Positions 135-160 (KTHDKRETIKERDWKREQSRILRDRG) are disordered. The span at 138 to 160 (DKRETIKERDWKREQSRILRDRG) shows a compositional bias: basic and acidic residues.

It belongs to the SmpB family.

The protein localises to the cytoplasm. Required for rescue of stalled ribosomes mediated by trans-translation. Binds to transfer-messenger RNA (tmRNA), required for stable association of tmRNA with ribosomes. tmRNA and SmpB together mimic tRNA shape, replacing the anticodon stem-loop with SmpB. tmRNA is encoded by the ssrA gene; the 2 termini fold to resemble tRNA(Ala) and it encodes a 'tag peptide', a short internal open reading frame. During trans-translation Ala-aminoacylated tmRNA acts like a tRNA, entering the A-site of stalled ribosomes, displacing the stalled mRNA. The ribosome then switches to translate the ORF on the tmRNA; the nascent peptide is terminated with the 'tag peptide' encoded by the tmRNA and targeted for degradation. The ribosome is freed to recommence translation, which seems to be the essential function of trans-translation. The polypeptide is SsrA-binding protein (Sphingomonas elodea).